The following is a 269-amino-acid chain: AA9 family lytic polysaccharide monooxygenase I (269 aa).

Residues 1–17 form the signal peptide; the sequence is MFSKKITALALVSAVKA. Cu(2+)-binding residues include His-18 and His-103. An intrachain disulfide couples Cys-73 to Cys-196. The N-linked (GlcNAc...) asparagine glycan is linked to Asn-156. 2 residues coordinate O2: His-182 and Gln-191. Tyr-193 lines the Cu(2+) pocket.

This sequence belongs to the polysaccharide monooxygenase AA9 family. Cu(2+) is required as a cofactor.

It localises to the secreted. It carries out the reaction [(1-&gt;4)-beta-D-glucosyl]n+m + reduced acceptor + O2 = 4-dehydro-beta-D-glucosyl-[(1-&gt;4)-beta-D-glucosyl]n-1 + [(1-&gt;4)-beta-D-glucosyl]m + acceptor + H2O.. Functionally, lytic polysaccharide monooxygenase (LPMO) that depolymerizes crystalline and amorphous polysaccharides via the oxidation of scissile alpha- or beta-(1-4)-glycosidic bonds, yielding C1 and C4 oxidation products. Catalysis by LPMOs requires the reduction of the active-site copper from Cu(II) to Cu(I) by a reducing agent and H(2)O(2) or O(2) as a cosubstrate. In Botryotinia fuckeliana (strain B05.10) (Noble rot fungus), this protein is AA9 family lytic polysaccharide monooxygenase I.